The sequence spans 411 residues: Peptidyl-prolyl cis-trans isomerase (411 aa).

Position 2 is an N-acetylserine (Ser-2). Disordered regions lie at residues 54-127 and 160-302; these read IIKR…TLSP and NYVK…PKSK. The segment covering 61–87 has biased composition (acidic residues); the sequence is FEDDDFLGGDFDEDEIDEESSEEEEEE. 2 positions are modified to phosphoserine: Ser-80 and Ser-81. Thr-89 is subject to Phosphothreonine. Composition is skewed to acidic residues over residues 103–118 and 173–242; these read ESED…DEFQ and EGED…EEQK. Tyr-184 bears the Phosphotyrosine; by CK2 mark. Ser-186 carries the phosphoserine; by CK2 modification. Basic residues predominate over residues 251–260; that stretch reads KSKKEKKRKH. The short motif at 256–271 is the Nuclear localization signal element; sequence KKRKHEEKEEEKKAKK. The segment covering 261 to 296 has biased composition (basic and acidic residues); the sequence is EEKEEEKKAKKVKKVEFKKDLEEGPTKPKSKKEQDK. One can recognise a PPIase FKBP-type domain in the interval 324–411; the sequence is GARVGMRYIG…FDVKLVSMKN (88 aa).

It belongs to the FKBP-type PPIase family. FKBP3/4 subfamily. Interacts with NOP53. Post-translationally, phosphorylated at tyrosine and dephosphorylated by the phosphotyrosine-specific phosphoprotein phosphatase PTP1.

The protein localises to the nucleus. It is found in the nucleolus. It catalyses the reaction [protein]-peptidylproline (omega=180) = [protein]-peptidylproline (omega=0). Its activity is regulated as follows. Inhibited by both FK506 and rapamycin. In terms of biological role, proline isomerase that belongs to an abundant class of enzymes that catalyze the cis-trans isomerization of X-Pro peptide bonds and can accelerate the refolding of proline-containing polypeptides. Specifically binds nuclear localization sequences. May be involved in the assembly or folding of ribosomal proteins. This Saccharomyces cerevisiae (strain ATCC 204508 / S288c) (Baker's yeast) protein is Peptidyl-prolyl cis-trans isomerase.